The primary structure comprises 440 residues: Tumor necrosis factor receptor superfamily member 10B (440 aa).

Disordered regions lie at residues 1–32 and 60–84; these read MEQRGQNAPAASGARKRHGPGPREARGARPGP and DLAPQQRAAPQQKRSSPSEGLCPPG. Residues 1–55 form the signal peptide; that stretch reads MEQRGQNAPAASGARKRHGPGPREARGARPGPRVPKTLVLVVAAVLLLVSAESAL. At 56–210 the chain is on the extracellular side; sequence ITQQDLAPQQ…SPGTPASPCS (155 aa). TNFR-Cys repeat units lie at residues 57-94, 97-137, and 138-178; these read TQQDLAPQQRAAPQQKRSSPSEGLCPPGHHISEDGRDC, CKYG…NTVC, and QCEE…DIEC. Positions 60-71 are enriched in low complexity; that stretch reads DLAPQQRAAPQQ. Cystine bridges form between C81/C94, C97/C113, C116/C129, C119/C137, C139/C153, C156/C170, and C160/C178. One copy of the TAPE repeat lies at 192–206; the sequence is PAVEETVTSSPGTPA. Residues 211–231 form a helical membrane-spanning segment; the sequence is LSGIIIGVTVAAVVLIVAVFV. The Cytoplasmic segment spans residues 232–440; it reads CKSLLWKKVL…LEGNADSAMS (209 aa). In terms of domain architecture, Death spans 339-422; it reads RQCFDDFADL…LAKQKIEDHL (84 aa).

As to quaternary structure, monomer. Can interact with TRADD and RIPK1. Interacts with HCMV protein UL141; this interaction prevents TNFRSF10B cell surface expression. Two TNFRSF10B monomers interact with a UL141 homodimer. Three TNFRSF10B molecules interact with TNFSF10 homotrimer. In the absence of stimulation, interacts with BIRC2, DDX3X and GSK3B. The interaction with BIRC2 and DDX3X is further enhanced upon receptor stimulation and accompanied by DDX3X and BIRC2 cleavage. Post-translationally, (Microbial infection) Glycosylated on Arg residue by S.typhimurium protein Ssek3. As to expression, widely expressed in adult and fetal tissues; very highly expressed in tumor cell lines such as HeLaS3, K-562, HL-60, SW480, A-549 and G-361; highly expressed in heart, peripheral blood lymphocytes, liver, pancreas, spleen, thymus, prostate, ovary, uterus, placenta, testis, esophagus, stomach and throughout the intestinal tract; not detectable in brain.

Its subcellular location is the membrane. Its function is as follows. Receptor for the cytotoxic ligand TNFSF10/TRAIL. The adapter molecule FADD recruits caspase-8 to the activated receptor. The resulting death-inducing signaling complex (DISC) performs caspase-8 proteolytic activation which initiates the subsequent cascade of caspases (aspartate-specific cysteine proteases) mediating apoptosis. Promotes the activation of NF-kappa-B. Essential for ER stress-induced apoptosis. This Homo sapiens (Human) protein is Tumor necrosis factor receptor superfamily member 10B (TNFRSF10B).